Here is a 301-residue protein sequence, read N- to C-terminus: Glycine--tRNA ligase alpha subunit (301 aa).

It belongs to the class-II aminoacyl-tRNA synthetase family. As to quaternary structure, tetramer of two alpha and two beta subunits.

Its subcellular location is the cytoplasm. The enzyme catalyses tRNA(Gly) + glycine + ATP = glycyl-tRNA(Gly) + AMP + diphosphate. The protein is Glycine--tRNA ligase alpha subunit of Shewanella loihica (strain ATCC BAA-1088 / PV-4).